Reading from the N-terminus, the 332-residue chain is tRNA U34 carboxymethyltransferase (332 aa).

Carboxy-S-adenosyl-L-methionine is bound by residues Lys91, Trp105, Lys110, Gly130, 152 to 154 (DPS), 181 to 182 (IE), Met196, Tyr200, and Arg315.

The protein belongs to the class I-like SAM-binding methyltransferase superfamily. CmoB family. In terms of assembly, homotetramer.

It carries out the reaction carboxy-S-adenosyl-L-methionine + 5-hydroxyuridine(34) in tRNA = 5-carboxymethoxyuridine(34) in tRNA + S-adenosyl-L-homocysteine + H(+). In terms of biological role, catalyzes carboxymethyl transfer from carboxy-S-adenosyl-L-methionine (Cx-SAM) to 5-hydroxyuridine (ho5U) to form 5-carboxymethoxyuridine (cmo5U) at position 34 in tRNAs. The sequence is that of tRNA U34 carboxymethyltransferase from Shewanella sp. (strain W3-18-1).